Reading from the N-terminus, the 561-residue chain is Zinc finger protein 394 (561 aa).

The interval 1–61 (MNSSLTAQRR…NYPAASPDPE (61 aa)) is disordered. A Phosphoserine modification is found at serine 12. A Glycyl lysine isopeptide (Lys-Gly) (interchain with G-Cter in SUMO2) cross-link involves residue lysine 40. The 83-residue stretch at 64-146 (RLHFRQLRYQ…AVVRALQRAL (83 aa)) folds into the SCAN box domain. One can recognise a KRAB domain in the interval 155-230 (VTFEDTAVSL…LQEAFQGKRP (76 aa)). Residues 182–201 (ESAQKDSGSTVPPSLESRVE) form a disordered region. Glycyl lysine isopeptide (Lys-Gly) (interchain with G-Cter in SUMO2) cross-links involve residues lysine 203 and lysine 228. A disordered region spans residues 231–285 (LFSKCGSTHEDRVEKQSGDPLPLKLENSPEAEGLNSISDVNKNGSIEGEDSKNNE). The segment covering 237-247 (STHEDRVEKQS) has biased composition (basic and acidic residues). Lysine 254 is covalently cross-linked (Glycyl lysine isopeptide (Lys-Gly) (interchain with G-Cter in SUMO2)). Positions 265–274 (NSISDVNKNG) are enriched in polar residues. Residue lysine 282 forms a Glycyl lysine isopeptide (Lys-Gly) (interchain with G-Cter in SUMO2) linkage. C2H2-type zinc fingers lie at residues 358–380 (YKCGNCGKSFKQRSDLFRHQRIH), 386–408 (YGCQECGKSFSQSAALTKHQRTH), 414–436 (YTCLKCGERFRQNSHLNRHQSTH), 442–463 (FKCEECGETCHISNLFRHQRLH), 469–491 (YKCEECEKSFKQRSDLFKHHRIH), 497–519 (YGCSVCGKRFNQSATLIKHQRIH), and 525–547 (YKCLECGERFRQSTHLIRHQRIH). Lysine 443 participates in a covalent cross-link: Glycyl lysine isopeptide (Lys-Gly) (interchain with G-Cter in SUMO2).

It belongs to the krueppel C2H2-type zinc-finger protein family.

The protein resides in the nucleus. May be involved in transcriptional regulation. This is Zinc finger protein 394 (ZNF394) from Homo sapiens (Human).